A 302-amino-acid chain; its full sequence is Sulfate adenylyltransferase subunit 2 (302 aa).

The protein belongs to the PAPS reductase family. CysD subfamily. Heterodimer composed of CysD, the smaller subunit, and CysN.

The enzyme catalyses sulfate + ATP + H(+) = adenosine 5'-phosphosulfate + diphosphate. Its pathway is sulfur metabolism; hydrogen sulfide biosynthesis; sulfite from sulfate: step 1/3. With CysN forms the ATP sulfurylase (ATPS) that catalyzes the adenylation of sulfate producing adenosine 5'-phosphosulfate (APS) and diphosphate, the first enzymatic step in sulfur assimilation pathway. APS synthesis involves the formation of a high-energy phosphoric-sulfuric acid anhydride bond driven by GTP hydrolysis by CysN coupled to ATP hydrolysis by CysD. In Xanthomonas euvesicatoria pv. vesicatoria (strain 85-10) (Xanthomonas campestris pv. vesicatoria), this protein is Sulfate adenylyltransferase subunit 2.